A 367-amino-acid polypeptide reads, in one-letter code: TATA-box-binding protein-like (367 aa).

The segment at 1-26 (MKKQSKTHKVDYKYYNSGSKTSRNRN) is disordered. Polar residues predominate over residues 16-26 (NSGSKTSRNRN).

Belongs to the TBP family.

In Acanthamoeba polyphaga (Amoeba), this protein is TATA-box-binding protein-like.